The sequence spans 558 residues: N-terminal histidine N-methyltransferase (558 aa).

Over 1–15 (MAPFRSIYEKDATKK) the chain is Cytoplasmic. A helical membrane pass occupies residues 16-32 (LVVGAALLVLAAFYSYV). Residues 33–49 (FLLTLAPVYGSTPSHIF) are Lumenal-facing. The helical transmembrane segment at 50-65 (HGYGVGIAGVAGWFSK) threads the bilayer. At 66–77 (DIVDRVSGRKAI) the chain is on the cytoplasmic side. A helical transmembrane segment spans residues 78-96 (YAIPVLAFFLPVVQYFVSQ). Residues 97–104 (QSSALGNP) are Lumenal-facing. The chain crosses the membrane as a helical span at residues 105–131 (AGPIFTEVLALYPLVLLSVACAGKLVQ). The Cytoplasmic portion of the chain corresponds to 132-145 (AGLNLQRHGDLVAE). Residues 146-169 (HIPLLGSYVIYSAGEHLIKAFLSR) traverse the membrane as a helical segment. Topologically, residues 170–172 (FIG) are lumenal. A helical transmembrane segment spans residues 173 to 194 (STVLLSRAGLQILIAIFYAAAV). The Cytoplasmic segment spans residues 195–197 (PSK). A helical transmembrane segment spans residues 198 to 215 (ALLLAIPAFLFSVTSNTH). Residues 216–558 (LPLGHTTTAL…VLPDRVWEGW (343 aa)) lie on the Lumenal side of the membrane.

This sequence belongs to the methyltransferase superfamily.

The protein localises to the endoplasmic reticulum membrane. The catalysed reaction is L-histidyl-[protein] + S-adenosyl-L-methionine = N(tele)-methyl-L-histidyl-[protein] + S-adenosyl-L-homocysteine + H(+). Functionally, protein-histidine N-methyltransferase that specifically mediates 3-methylhistidine (tele-methylhistidine) methylation at 'His-1', which protects the side-chain from oxidative damage. Methylates lytic polysaccharide monooxygenases (LPMOs) destined for secretion, including AN4702. The protein is N-terminal histidine N-methyltransferase of Emericella nidulans (strain FGSC A4 / ATCC 38163 / CBS 112.46 / NRRL 194 / M139) (Aspergillus nidulans).